Consider the following 472-residue polypeptide: Zinc finger CCCH domain-containing protein 59 (472 aa).

Residues 87–139 (YKSPEGNRPRQNAANGSAKPQVIGTGHRVSNQPRKNAVYGPRSSSLSDTRGCG) are disordered. A C3H1-type zinc finger spans residues 145–172 (SPKKSVCNFWKDGNCKKGEKCQFLHSWS). WD repeat units lie at residues 185–226 (GHKN…RSIN), 261–301 (HLEG…SDPF), 310–347 (HHSG…CRMT), 350–387 (QHIG…SLKV), and 436–472 (FSTQ…GTKV).

The sequence is that of Zinc finger CCCH domain-containing protein 59 (ZFWD3) from Arabidopsis thaliana (Mouse-ear cress).